Reading from the N-terminus, the 456-residue chain is CCA-adding enzyme (456 aa).

2 residues coordinate ATP: Ser53 and Lys56. CTP contacts are provided by Ser53 and Lys56. Positions 65, 67, and 119 each coordinate Mg(2+). 3 residues coordinate ATP: His142, Lys161, and Tyr170. Residues His142, Lys161, and Tyr170 each contribute to the CTP site.

Belongs to the tRNA nucleotidyltransferase/poly(A) polymerase family. Archaeal CCA-adding enzyme subfamily. Homodimer. Mg(2+) serves as cofactor.

The catalysed reaction is a tRNA precursor + 2 CTP + ATP = a tRNA with a 3' CCA end + 3 diphosphate. The enzyme catalyses a tRNA with a 3' CCA end + 2 CTP + ATP = a tRNA with a 3' CCACCA end + 3 diphosphate. Catalyzes the addition and repair of the essential 3'-terminal CCA sequence in tRNAs without using a nucleic acid template. Adds these three nucleotides in the order of C, C, and A to the tRNA nucleotide-73, using CTP and ATP as substrates and producing inorganic pyrophosphate. tRNA 3'-terminal CCA addition is required both for tRNA processing and repair. Also involved in tRNA surveillance by mediating tandem CCA addition to generate a CCACCA at the 3' terminus of unstable tRNAs. While stable tRNAs receive only 3'-terminal CCA, unstable tRNAs are marked with CCACCA and rapidly degraded. The chain is CCA-adding enzyme from Thermococcus kodakarensis (strain ATCC BAA-918 / JCM 12380 / KOD1) (Pyrococcus kodakaraensis (strain KOD1)).